Consider the following 101-residue polypeptide: NAD(P)H-quinone oxidoreductase subunit 4L, chloroplastic (101 aa).

Helical transmembrane passes span 2-22 (ILEH…YGLI), 32-52 (MCLE…SDFF), and 61-81 (IFSI…LAIV).

The protein belongs to the complex I subunit 4L family. In terms of assembly, NDH is composed of at least 16 different subunits, 5 of which are encoded in the nucleus.

Its subcellular location is the plastid. The protein resides in the chloroplast thylakoid membrane. The enzyme catalyses a plastoquinone + NADH + (n+1) H(+)(in) = a plastoquinol + NAD(+) + n H(+)(out). It catalyses the reaction a plastoquinone + NADPH + (n+1) H(+)(in) = a plastoquinol + NADP(+) + n H(+)(out). Its function is as follows. NDH shuttles electrons from NAD(P)H:plastoquinone, via FMN and iron-sulfur (Fe-S) centers, to quinones in the photosynthetic chain and possibly in a chloroplast respiratory chain. The immediate electron acceptor for the enzyme in this species is believed to be plastoquinone. Couples the redox reaction to proton translocation, and thus conserves the redox energy in a proton gradient. In Eucalyptus globulus subsp. globulus (Tasmanian blue gum), this protein is NAD(P)H-quinone oxidoreductase subunit 4L, chloroplastic.